Reading from the N-terminus, the 375-residue chain is Fluoride export protein 1 (375 aa).

Residues 1 to 11 are Cytoplasmic-facing; that stretch reads MIFNPVISNHK. A helical transmembrane segment spans residues 12-32; the sequence is LSHYIHVFCTFTTFCILGTET. The Extracellular portion of the chain corresponds to 33–34; it reads RQ. The chain crosses the membrane as a helical span at residues 35-55; the sequence is AITALSTYTPAFVTAPTVLWS. Topologically, residues 56-79 are cytoplasmic; it reads NCSSCMLMGIMQSLNAYTWMKDHQ. Residues 80-100 form a helical membrane-spanning segment; the sequence is VLFLGVTTGYCGALSSFSSML. Residues 101-127 lie on the Extracellular side of the membrane; it reads LEMFEHSTNLTNGNIANHTKLPNRAYG. 2 N-linked (GlcNAc...) asparagine glycosylation sites follow: Asn-109 and Asn-117. The chain crosses the membrane as a helical span at residues 128-148; that stretch reads IMEFLSVLLVHLMVSMGSLIF. Residues 149–213 are Cytoplasmic-facing; sequence GRQLGKEVIV…FKKFFDIVDK (65 aa). The chain crosses the membrane as a helical span at residues 214–234; sequence LAYALAFPLIILFVVLCAYYE. Residue Asn-235 is glycosylated (N-linked (GlcNAc...) asparagine). At 235–241 the chain is on the extracellular side; it reads NYSRGKW. Residues 242–262 traverse the membrane as a helical segment; sequence TLPCLFGIFAGFLRYWLAEMF. Residues 263-268 are Cytoplasmic-facing; the sequence is NKTNKK. A helical membrane pass occupies residues 269–289; the sequence is FPLGTFLANVFATLLIGIFTM. Residues 290-310 are Extracellular-facing; sequence VQRGKKHFSTDVPIVNSLNSC. The chain crosses the membrane as a helical span at residues 311 to 331; it reads HIVSALISGFCGTLSTISTFI. At 332 to 338 the chain is on the cytoplasmic side; the sequence is NEGYKLS. The chain crosses the membrane as a helical span at residues 339–359; sequence FINMLIYYTVSIAISYCLLVI. Residues 360–375 are Extracellular-facing; sequence TLGSYAWTRGLTNPIC.

The protein belongs to the fluoride channel Fluc/FEX (TC 1.A.43) family.

It localises to the cell membrane. It catalyses the reaction fluoride(in) = fluoride(out). Fluoride channel required for the rapid expulsion of cytoplasmic fluoride. This Saccharomyces cerevisiae (strain ATCC 204508 / S288c) (Baker's yeast) protein is Fluoride export protein 1.